Consider the following 380-residue polypeptide: Queuine tRNA-ribosyltransferase (380 aa).

Residue D96 is the Proton acceptor of the active site. Substrate contacts are provided by residues 96–100 (DSGGF), D150, Q193, and G220. An RNA binding region spans residues 251-257 (GVGAPDS). Catalysis depends on D270, which acts as the Nucleophile. The tract at residues 275–279 (TRIAR) is RNA binding; important for wobble base 34 recognition. The Zn(2+) site is built by C308, C310, C313, and H339.

Belongs to the queuine tRNA-ribosyltransferase family. In terms of assembly, homodimer. Within each dimer, one monomer is responsible for RNA recognition and catalysis, while the other monomer binds to the replacement base PreQ1. Zn(2+) serves as cofactor.

It carries out the reaction 7-aminomethyl-7-carbaguanine + guanosine(34) in tRNA = 7-aminomethyl-7-carbaguanosine(34) in tRNA + guanine. It participates in tRNA modification; tRNA-queuosine biosynthesis. Functionally, catalyzes the base-exchange of a guanine (G) residue with the queuine precursor 7-aminomethyl-7-deazaguanine (PreQ1) at position 34 (anticodon wobble position) in tRNAs with GU(N) anticodons (tRNA-Asp, -Asn, -His and -Tyr). Catalysis occurs through a double-displacement mechanism. The nucleophile active site attacks the C1' of nucleotide 34 to detach the guanine base from the RNA, forming a covalent enzyme-RNA intermediate. The proton acceptor active site deprotonates the incoming PreQ1, allowing a nucleophilic attack on the C1' of the ribose to form the product. After dissociation, two additional enzymatic reactions on the tRNA convert PreQ1 to queuine (Q), resulting in the hypermodified nucleoside queuosine (7-(((4,5-cis-dihydroxy-2-cyclopenten-1-yl)amino)methyl)-7-deazaguanosine). The protein is Queuine tRNA-ribosyltransferase of Streptococcus pyogenes serotype M1.